A 574-amino-acid chain; its full sequence is Interleukin-1 receptor-like 2 (574 aa).

A signal peptide spans 1-21 (MGVTSLLFCGVFFLLLLFVAA). Residues 22–338 (DTCEDIFMHN…ILIYPVPDFR (317 aa)) lie on the Extracellular side of the membrane. Ig-like C2-type domains follow at residues 25 to 113 (EDIF…VNLT), 132 to 215 (PDVY…IRNY), and 225 to 321 (YGRR…TCHA). N-linked (GlcNAc...) asparagine glycans are attached at residues asparagine 43, asparagine 55, and asparagine 111. Cysteine 44 and cysteine 97 are oxidised to a cystine. Cysteine 149 and cysteine 199 are oxidised to a cystine. N-linked (GlcNAc...) asparagine glycosylation is found at asparagine 231, asparagine 237, asparagine 253, asparagine 269, asparagine 290, and asparagine 302. Cysteine 252 and cysteine 319 are oxidised to a cystine. The helical transmembrane segment at 339 to 359 (AYLLGGLMAFLLLVVSVLFIY) threads the bilayer. The Cytoplasmic segment spans residues 360–574 (NSFKIDIMLW…CNAATGLITP (215 aa)). Residues 384-539 (KLYDAYVLYP…KFWKKVRYHM (156 aa)) form the TIR domain. Residue glutamate 470 is part of the active site.

It belongs to the interleukin-1 receptor family. As to quaternary structure, interacts with IL1RAP; the association is enhanced by IL36B indicative for an functional signaling complex and inhibited by IL36RN. In terms of tissue distribution, expressed in bone marrow-derived dendritic cells, splenic CD4(+) T-cells, bone marrow-derived macrophages and bone marrow-derived neutrophils.

The protein localises to the membrane. It catalyses the reaction NAD(+) + H2O = ADP-D-ribose + nicotinamide + H(+). In terms of biological role, receptor for interleukin-36 (IL36A, IL36B and IL36G). After binding to interleukin-36 associates with the coreceptor IL1RAP to form the interleukin-36 receptor complex which mediates interleukin-36-dependent activation of NF-kappa-B, MAPK and other pathways. The IL-36 signaling system is thought to be present in epithelial barriers and to take part in local inflammatory response; it is similar to the IL-1 system. Seems to be involved in skin inflammatory response by induction of the IL-23/IL-17/IL-22 pathway. The chain is Interleukin-1 receptor-like 2 (Il1rl2) from Mus musculus (Mouse).